A 341-amino-acid polypeptide reads, in one-letter code: Phosphate acyltransferase (341 aa).

Belongs to the PlsX family. As to quaternary structure, homodimer. Probably interacts with PlsY.

The protein localises to the cytoplasm. It carries out the reaction a fatty acyl-[ACP] + phosphate = an acyl phosphate + holo-[ACP]. It functions in the pathway lipid metabolism; phospholipid metabolism. Functionally, catalyzes the reversible formation of acyl-phosphate (acyl-PO(4)) from acyl-[acyl-carrier-protein] (acyl-ACP). This enzyme utilizes acyl-ACP as fatty acyl donor, but not acyl-CoA. The polypeptide is Phosphate acyltransferase (Chlorobaculum parvum (strain DSM 263 / NCIMB 8327) (Chlorobium vibrioforme subsp. thiosulfatophilum)).